A 127-amino-acid chain; its full sequence is Protein ApaG (127 aa).

An ApaG domain is found at 3–127 (DDPRYRVEVE…FVLSVPRTLH (125 aa)).

This Xanthomonas axonopodis pv. citri (strain 306) protein is Protein ApaG.